The chain runs to 377 residues: Glutamate 5-kinase (377 aa).

ATP is bound at residue lysine 20. Residues serine 59, aspartate 146, and asparagine 158 each coordinate substrate. ATP-binding positions include 178-179 and 220-226; these read SD and TGGMSTK. Residues 285 to 363 form the PUA domain; it reads RGTLTVDAGA…ADIEAVLGYR (79 aa).

Belongs to the glutamate 5-kinase family.

The protein resides in the cytoplasm. It carries out the reaction L-glutamate + ATP = L-glutamyl 5-phosphate + ADP. The protein operates within amino-acid biosynthesis; L-proline biosynthesis; L-glutamate 5-semialdehyde from L-glutamate: step 1/2. Its function is as follows. Catalyzes the transfer of a phosphate group to glutamate to form L-glutamate 5-phosphate. The protein is Glutamate 5-kinase of Myxococcus xanthus (strain DK1622).